The primary structure comprises 122 residues: Prefoldin subunit 1 (122 aa).

Position 2 is an N-acetylalanine (Ala-2).

The protein belongs to the prefoldin subunit beta family. As to quaternary structure, heterohexamer of two PFD-alpha type and four PFD-beta type subunits.

Binds specifically to cytosolic chaperonin (c-CPN) and transfers target proteins to it. Binds to nascent polypeptide chain and promotes folding in an environment in which there are many competing pathways for nonnative proteins. This Homo sapiens (Human) protein is Prefoldin subunit 1 (PFDN1).